The primary structure comprises 275 residues: Large ribosomal subunit protein uL2 (275 aa).

Residues 222-275 (GKVMNPVDHPHGGGEGRNPIGRNPSTPWGKLAMGVKTRGNKKSDRLIVKRRNKK) form a disordered region.

The protein belongs to the universal ribosomal protein uL2 family. As to quaternary structure, part of the 50S ribosomal subunit. Forms a bridge to the 30S subunit in the 70S ribosome.

Its function is as follows. One of the primary rRNA binding proteins. Required for association of the 30S and 50S subunits to form the 70S ribosome, for tRNA binding and peptide bond formation. It has been suggested to have peptidyltransferase activity; this is somewhat controversial. Makes several contacts with the 16S rRNA in the 70S ribosome. In Desulforamulus reducens (strain ATCC BAA-1160 / DSM 100696 / MI-1) (Desulfotomaculum reducens), this protein is Large ribosomal subunit protein uL2.